The following is a 416-amino-acid chain: Imidazolonepropionase (416 aa).

The Fe(3+) site is built by His-78 and His-80. Zn(2+)-binding residues include His-78 and His-80. 4-imidazolone-5-propanoate contacts are provided by Arg-87, Tyr-150, and His-183. Tyr-150 serves as a coordination point for N-formimidoyl-L-glutamate. Fe(3+) is bound at residue His-248. His-248 provides a ligand contact to Zn(2+). Gln-251 is a binding site for 4-imidazolone-5-propanoate. Residue Asp-323 coordinates Fe(3+). Zn(2+) is bound at residue Asp-323. Residues Asn-325 and Gly-327 each coordinate N-formimidoyl-L-glutamate. Thr-328 lines the 4-imidazolone-5-propanoate pocket.

This sequence belongs to the metallo-dependent hydrolases superfamily. HutI family. It depends on Zn(2+) as a cofactor. Fe(3+) serves as cofactor.

Its subcellular location is the cytoplasm. The enzyme catalyses 4-imidazolone-5-propanoate + H2O = N-formimidoyl-L-glutamate. It functions in the pathway amino-acid degradation; L-histidine degradation into L-glutamate; N-formimidoyl-L-glutamate from L-histidine: step 3/3. Its function is as follows. Catalyzes the hydrolytic cleavage of the carbon-nitrogen bond in imidazolone-5-propanoate to yield N-formimidoyl-L-glutamate. It is the third step in the universal histidine degradation pathway. This Vibrio campbellii (strain ATCC BAA-1116) protein is Imidazolonepropionase.